Consider the following 282-residue polypeptide: Predicted GPI-anchored protein 23 (282 aa).

Positions M1–A18 are cleaved as a signal peptide. Positions G163–M264 are disordered. N-linked (GlcNAc...) asparagine glycans are attached at residues N180, N192, and N257. Gly residues predominate over residues G186–S216. Positions L236–M264 are enriched in low complexity. The GPI-anchor amidated serine moiety is linked to residue S259. A propeptide spans S260–I282 (removed in mature form).

It localises to the cell membrane. Its function is as follows. Probable cell surface protein involved in the process of adhesion and early events of invasion. This Candida albicans (strain SC5314 / ATCC MYA-2876) (Yeast) protein is Predicted GPI-anchored protein 23 (PGA23).